We begin with the raw amino-acid sequence, 35 residues long: ADSRKPDDRYDMSGNDALGDVKLATYEDNPWETFK.

Aspartate 20 serves as a coordination point for Mg(2+).

It belongs to the arthropod phospholipase D family. Class II subfamily. It depends on Mg(2+) as a cofactor. Contains 2 disulfide bonds. In terms of tissue distribution, expressed by the venom gland.

It is found in the secreted. It catalyses the reaction an N-(acyl)-sphingosylphosphocholine = an N-(acyl)-sphingosyl-1,3-cyclic phosphate + choline. It carries out the reaction an N-(acyl)-sphingosylphosphoethanolamine = an N-(acyl)-sphingosyl-1,3-cyclic phosphate + ethanolamine. The catalysed reaction is a 1-acyl-sn-glycero-3-phosphocholine = a 1-acyl-sn-glycero-2,3-cyclic phosphate + choline. The enzyme catalyses a 1-acyl-sn-glycero-3-phosphoethanolamine = a 1-acyl-sn-glycero-2,3-cyclic phosphate + ethanolamine. Functionally, dermonecrotic toxins cleave the phosphodiester linkage between the phosphate and headgroup of certain phospholipids (sphingolipid and lysolipid substrates), forming an alcohol (often choline) and a cyclic phosphate. This toxin acts on sphingomyelin (SM). It may also act on ceramide phosphoethanolamine (CPE), lysophosphatidylcholine (LPC) and lysophosphatidylethanolamine (LPE), but not on lysophosphatidylserine (LPS), and lysophosphatidylglycerol (LPG). It acts by transphosphatidylation, releasing exclusively cyclic phosphate products as second products. Induces dermonecrosis, hemolysis, increased vascular permeability, edema, inflammatory response, and platelet aggregation. The polypeptide is Dermonecrotic toxin LgSicTox-beta-LOXN4 (Loxosceles gaucho (Spider)).